The primary structure comprises 226 residues: Cytidylate kinase (226 aa).

9-17 (GPAGAGKST) is a binding site for ATP.

Belongs to the cytidylate kinase family. Type 1 subfamily.

Its subcellular location is the cytoplasm. The enzyme catalyses CMP + ATP = CDP + ADP. It carries out the reaction dCMP + ATP = dCDP + ADP. This Clostridium tetani (strain Massachusetts / E88) protein is Cytidylate kinase.